The sequence spans 496 residues: MACKSTAVRSATRVAPTRRLGMVTGALVALMAGAALLPAAHAQQTQKKSAPLRGIFTTPDASPSQPLLRGTLPGPSTASGAARSQLVDEVVAVVNTDIITRRELLDRADLVERTLQSQNRQVPVRADLLGEVLEQLILERVQAQTAKESGIRVSDADVDRAVESVAQRNNLSVSQLKSKLAQSGLAYDKYREDLRQEILLARLRDREVDSKVQVFDGEIDNFLAQQGGSAASSGVQEYNVAQILVPVAEDASAEQKAAARGKAESLLKQVQGGADFAKLARDSSGAPEAAQGGELGLRPIGRLPAQFANAVVDLKPGQVVDQVIESPAGFHVLKLVDKRAQGTAITAKVAQTQVRHILIKTGPTMSADDARRQLAGLRDRIVHGYDFGDAARRYSQDTSASAGGELGWVSPGQLVPEFEQAMGLLKPGEVSQPVQSQFGLHLIQVEGRREAEVPVDRQRDYARSVIREQKVQAAYEDWLRQLRDSAHVEYRVNRQQ.

Positions 1–42 are cleaved as a signal peptide; it reads MACKSTAVRSATRVAPTRRLGMVTGALVALMAGAALLPAAHA. A disordered region spans residues 53 to 80; it reads RGIFTTPDASPSQPLLRGTLPGPSTASG. PpiC domains lie at 235-337 and 349-447; these read VQEY…KLVD and VAQT…QVEG.

The protein localises to the periplasm. It carries out the reaction [protein]-peptidylproline (omega=180) = [protein]-peptidylproline (omega=0). Functionally, chaperone involved in the correct folding and assembly of outer membrane proteins. Recognizes specific patterns of aromatic residues and the orientation of their side chains, which are found more frequently in integral outer membrane proteins. May act in both early periplasmic and late outer membrane-associated steps of protein maturation. This Ralstonia nicotianae (strain ATCC BAA-1114 / GMI1000) (Ralstonia solanacearum) protein is Chaperone SurA.